We begin with the raw amino-acid sequence, 77 residues long: Acyl carrier protein (77 aa).

Positions 1 to 76 constitute a Carrier domain; that stretch reads MENFDKVKDI…DAVKYINSLE (76 aa). S36 carries the O-(pantetheine 4'-phosphoryl)serine modification.

Belongs to the acyl carrier protein (ACP) family. In terms of processing, 4'-phosphopantetheine is transferred from CoA to a specific serine of apo-ACP by AcpS. This modification is essential for activity because fatty acids are bound in thioester linkage to the sulfhydryl of the prosthetic group.

The protein localises to the cytoplasm. It functions in the pathway lipid metabolism; fatty acid biosynthesis. In terms of biological role, carrier of the growing fatty acid chain in fatty acid biosynthesis. The polypeptide is Acyl carrier protein (Staphylococcus epidermidis (strain ATCC 12228 / FDA PCI 1200)).